The primary structure comprises 159 residues: Ornithine decarboxylase antizyme (159 aa).

It belongs to the ODC antizyme family. As to quaternary structure, interacts with ODC1 and thereby sterically blocks ODC homodimerization.

Ornithine decarboxylase (ODC) antizyme protein that negatively regulates ODC activity and intracellular polyamine biosynthesis and uptake in response to increased intracellular polyamine levels. Binds to ODC monomers, inhibiting the assembly of the functional ODC homodimer, and targets the monomers for ubiquitin-independent proteolytic destruction by the 26S proteasome. The chain is Ornithine decarboxylase antizyme from Caenorhabditis elegans.